Consider the following 1264-residue polypeptide: P-type sodium-transporting ATPase4 (1264 aa).

Residues 1–12 show a composition bias toward polar residues; that stretch reads MSSQNNNKQGGQ. Residues 1-102 are disordered; the sequence is MSSQNNNKQG…INGEKNDDNN (102 aa). Composition is skewed to basic and acidic residues over residues 15–42 and 50–64; these read NNKKDSDDIKPSVSKEDLINSLKNDELN and NDMKKNENMNIKKNE. The next 8 helical transmembrane spans lie at 165–185, 186–206, 359–379, 393–413, 923–943, 1006–1026, 1203–1223, and 1226–1246; these read VWLIFLSQYCSPVVLLLLVAA, VASLALNEVVEGVAIISIVTL, GLIGLIAIIVLVVIISLAVII, FVIIIIGVGFAVSSIPEGLPM, FVCFLLGTNIGEIIYLSVAIV, IFEALCVLLSLAFSLYICTGF, CSISATLTFLSTCIPGITSIL, and TCLLWWQYLLAIFWALLNLFL.

It belongs to the cation transport ATPase (P-type) (TC 3.A.3) family.

It is found in the cell membrane. It catalyses the reaction Na(+)(in) + ATP + H2O = Na(+)(out) + ADP + phosphate + H(+). With respect to regulation, inhibited by cipargamin and other spiroindolone compounds. Inhibited by 4-cyano-3-methylisoquinoline derivatives MB14 and MB10 but not RK18. Inhibited by (+)-SJ733, a dihydroisoquinolone compound. Functionally, sodium-exporting ATPase. Required for the extrusion of Na(+) from the intraerythrocytic parasites to maintain a low cytosolic concentration of Na(+). This chain is P-type sodium-transporting ATPase4, found in Plasmodium falciparum (isolate 3D7).